A 207-amino-acid polypeptide reads, in one-letter code: Thiamine-phosphate synthase (207 aa).

4-amino-2-methyl-5-(diphosphooxymethyl)pyrimidine-binding positions include Gln36–Lys40 and Asn68. Positions 69 and 88 each coordinate Mg(2+). Residue Ser106 participates in 4-amino-2-methyl-5-(diphosphooxymethyl)pyrimidine binding. Position 132 to 134 (Thr132 to Thr134) interacts with 2-[(2R,5Z)-2-carboxy-4-methylthiazol-5(2H)-ylidene]ethyl phosphate. Lys135 is a 4-amino-2-methyl-5-(diphosphooxymethyl)pyrimidine binding site. 2-[(2R,5Z)-2-carboxy-4-methylthiazol-5(2H)-ylidene]ethyl phosphate contacts are provided by residues Gly162 and Val182–Ser183.

This sequence belongs to the thiamine-phosphate synthase family. Requires Mg(2+) as cofactor.

It carries out the reaction 2-[(2R,5Z)-2-carboxy-4-methylthiazol-5(2H)-ylidene]ethyl phosphate + 4-amino-2-methyl-5-(diphosphooxymethyl)pyrimidine + 2 H(+) = thiamine phosphate + CO2 + diphosphate. The catalysed reaction is 2-(2-carboxy-4-methylthiazol-5-yl)ethyl phosphate + 4-amino-2-methyl-5-(diphosphooxymethyl)pyrimidine + 2 H(+) = thiamine phosphate + CO2 + diphosphate. It catalyses the reaction 4-methyl-5-(2-phosphooxyethyl)-thiazole + 4-amino-2-methyl-5-(diphosphooxymethyl)pyrimidine + H(+) = thiamine phosphate + diphosphate. It functions in the pathway cofactor biosynthesis; thiamine diphosphate biosynthesis; thiamine phosphate from 4-amino-2-methyl-5-diphosphomethylpyrimidine and 4-methyl-5-(2-phosphoethyl)-thiazole: step 1/1. Condenses 4-methyl-5-(beta-hydroxyethyl)thiazole monophosphate (THZ-P) and 2-methyl-4-amino-5-hydroxymethyl pyrimidine pyrophosphate (HMP-PP) to form thiamine monophosphate (TMP). This chain is Thiamine-phosphate synthase, found in Methanococcus maripaludis (strain C6 / ATCC BAA-1332).